The following is a 2766-amino-acid chain: Thyroglobulin (2766 aa).

The signal sequence occupies residues 1–20 (MTALVLWVSTLLSSVCLVAA). Tyrosine 25 carries the iodotyrosine; alternate modification. Tyrosine 25 bears the Sulfotyrosine; alternate mark. At tyrosine 25 the chain carries Thyroxine; alternate. Tyrosine 25 is modified (triiodothyronine; alternate). 4 Thyroglobulin type-1 domains span residues 32-93 (LRPC…PTVC), 94-161 (LSFC…PTRC), 162-298 (PRSC…RFRC), and 299-359 (PTKC…PPSC). 8 cysteine pairs are disulfide-bonded: cysteine 35–cysteine 53, cysteine 64–cysteine 71, cysteine 73–cysteine 93, cysteine 97–cysteine 121, cysteine 132–cysteine 139, cysteine 141–cysteine 161, cysteine 165–cysteine 184, and cysteine 195–cysteine 236. Residue tyrosine 109 is modified to Iodotyrosine. N-linked (GlcNAc...) asparagine glycosylation is present at asparagine 111. Tyrosine 150 is modified (iodotyrosine; alternate). The residue at position 150 (tyrosine 150) is a Diiodotyrosine; alternate. Asparagine 199 is a glycosylation site (N-linked (GlcNAc...) asparagine). Iodotyrosine is present on residues tyrosine 235 and tyrosine 259. Disulfide bonds link cysteine 302–cysteine 320, cysteine 331–cysteine 337, cysteine 339–cysteine 359, cysteine 365–cysteine 620, cysteine 408–cysteine 608, cysteine 631–cysteine 636, cysteine 638–cysteine 658, cysteine 662–cysteine 687, and cysteine 698–cysteine 703. Residues asparagine 484 and asparagine 496 are each glycosylated (N-linked (GlcNAc...) asparagine). 6 consecutive Thyroglobulin type-1 domains span residues 605–658 (AQAC…RPRC), 659–726 (PTKC…AKQC), 727–922 (PSVC…IPAC), 923–1074 (PGPC…MPQC), 1075–1146 (PTNC…SAQC), and 1147–1211 (PGLC…QPAC). Tyrosine 704 is subject to Iodotyrosine; alternate. Residue tyrosine 704 is modified to Thyroxine; alternate. Residue tyrosine 704 is modified to Triiodothyronine; alternate. Residue tyrosine 704 is modified to Diiodotyrosine; alternate. 16 disulfide bridges follow: cysteine 705–cysteine 726, cysteine 730–cysteine 763, cysteine 774–cysteine 899, cysteine 901–cysteine 922, cysteine 926–cysteine 1032, cysteine 1043–cysteine 1050, cysteine 1052–cysteine 1074, cysteine 1078–cysteine 1109, cysteine 1127–cysteine 1146, cysteine 1150–cysteine 1170, cysteine 1182–cysteine 1189, cysteine 1191–cysteine 1211, cysteine 1216–cysteine 1265, cysteine 1232–cysteine 1246, cysteine 1306–cysteine 1356, and cysteine 1331–cysteine 1347. N-linked (GlcNAc...) asparagine glycosylation is present at asparagine 748. An Iodotyrosine modification is found at tyrosine 785. N-linked (GlcNAc...) asparagine glycosylation is present at asparagine 817. Tyrosine 867 carries the iodotyrosine; alternate modification. Tyrosine 867 carries the diiodotyrosine; alternate modification. Tyrosine 884 carries the diiodotyrosine modification. N-linked (GlcNAc...) asparagine glycosylation is present at asparagine 948. Iodotyrosine; alternate is present on tyrosine 993. Tyrosine 993 carries the post-translational modification Diiodotyrosine; alternate. A glycan (N-linked (GlcNAc...) asparagine) is linked at asparagine 1141. Tyrosine 1310 is modified (iodotyrosine). Thyroxine is present on tyrosine 1310. Asparagine 1349 and asparagine 1365 each carry an N-linked (GlcNAc...) asparagine glycan. Intrachain disulfides connect cysteine 1441-cysteine 1458, cysteine 1461-cysteine 1472, cysteine 1475-cysteine 1489, cysteine 1492-cysteine 1509, cysteine 1513-cysteine 1522, cysteine 1542-cysteine 1564, cysteine 1602-cysteine 1626, cysteine 1606-cysteine 1612, and cysteine 1638-cysteine 1661. Type II repeat units lie at residues 1455–1468 (ALGC…SFSQ), 1469–1485 (DGRC…EQAG), and 1486–1502 (SSAC…ITTG). Residues 1510–1564 (VTDCQKNEAGLQCDQNGQYQASQKNRDSGEVFCVDSEGRKLQWLQTEAGLSESQC) enclose the Thyroglobulin type-1 11 domain. The stretch at 1602 to 1722 (CLTDCANDEA…GANLTDTHTY (121 aa)) is one Type IIIA repeat. 4 N-linked (GlcNAc...) asparagine glycosylation sites follow: asparagine 1715, asparagine 1729, asparagine 1773, and asparagine 1864. Intrachain disulfides connect cysteine 1723-cysteine 1748, cysteine 1727-cysteine 1733, cysteine 1732-cysteine 1834, and cysteine 1759-cysteine 1776. One copy of the Type IIIB repeat lies at 1723 to 1889 (CLLACDNDSC…LFSAEQANLW (167 aa)). 7 disulfide bridges follow: cysteine 1890–cysteine 1916, cysteine 1894–cysteine 1901, cysteine 1925–cysteine 1936, cysteine 1993–cysteine 2021, cysteine 1997–cysteine 2003, cysteine 2002–cysteine 2073, and cysteine 2032–cysteine 2045. One copy of the Type IIIA repeat lies at 1890 to 1992 (CLSRCAQEPI…GKLISNGFFE (103 aa)). An N-linked (GlcNAc...) asparagine glycan is attached at asparagine 1935. Residues 1993–2125 (CERLCDRDPC…AATSNFSMAQ (133 aa)) form a Type IIIB repeat. The N-linked (GlcNAc...) asparagine glycan is linked to asparagine 2010. A glycan (N-linked (GlcNAc...) asparagine) is linked at asparagine 2120. Residues 2126–2183 (DFCLQQCSRHQDCLVTTLQIQPGVVRCVFYPDIQNCIHSLRSHTCWLLLHEEATYIYR) form a Type IIIA repeat. 3 disulfides stabilise this stretch: cysteine 2128–cysteine 2152, cysteine 2132–cysteine 2138, and cysteine 2161–cysteine 2170. Iodotyrosine is present on tyrosine 2182. A cholinesterase-like (ChEL) region spans residues 2186 to 2766 (GIPLVQSDVT…LEPVPKSYSK (581 aa)). The N-linked (GlcNAc...) asparagine glycan is linked to asparagine 2249. A disulfide bond links cysteine 2263 and cysteine 2280. Asparagine 2294 carries N-linked (GlcNAc...) asparagine glycosylation. Cysteine 2441 and cysteine 2452 are disulfide-bonded. A Thyroxine modification is found at tyrosine 2539. Tyrosine 2572 is modified (iodotyrosine; alternate). Residue tyrosine 2572 is modified to Thyroxine; alternate. Position 2572 is a triiodothyronine; alternate (tyrosine 2572). At tyrosine 2572 the chain carries Diiodotyrosine; alternate. The N-linked (GlcNAc...) asparagine glycan is linked to asparagine 2581. Residues tyrosine 2586 and tyrosine 2616 each carry the iodotyrosine modification. A disulfide bond links cysteine 2590 and cysteine 2714. Position 2696 is a diiodotyrosine (tyrosine 2696). The segment at 2729-2766 (GAKDAQLTKSEEEDLEVGPGLEEDLSGSLEPVPKSYSK) is disordered. A compositionally biased stretch (acidic residues) spans 2739 to 2753 (EEEDLEVGPGLEEDL). Iodotyrosine; alternate is present on tyrosine 2764. The residue at position 2764 (tyrosine 2764) is a Thyroxine; alternate. Tyrosine 2764 carries the post-translational modification Triiodothyronine; alternate. Diiodotyrosine; alternate is present on tyrosine 2764.

This sequence belongs to the type-B carboxylesterase/lipase family. Monomer. Homodimer (via ChEL region); occurs in the endoplasmic reticulum and is required for export to the Golgi apparatus. Homooligomer; disulfide-linked; stored in this form in the thyroid follicle lumen. Post-translationally, iodinated on tyrosine residues by TPO. There are 4 pairs of iodinated tyrosines used for coupling: acceptor Tyr-25 is coupled to donor Tyr-150 or Tyr-235, acceptor Tyr-2572 is coupled to donor Tyr-2539, acceptor Tyr-2764 in monomer 1 is coupled to donor Tyr-2764 in monomer 2 and acceptor Tyr-1310 in monomer 1 is coupled to donor Tyr-109 in monomer 2. In terms of processing, sulfated tyrosines are desulfated during iodination. Undergoes sequential proteolysis by cathepsins to release thyroxine (T4) and triiodothyronine (T3) hormones. In the thyroid follicle lumen, cross-linked TG (storage form) is solubilized by limited proteolysis mediated by cathepsins CTSB and/or CTSL. Partially cleaved TG is further processed by CTSK/cathepsin K and/or CTSL resulting in the release of T4. Following endocytosis, further processing occurs leading to the release of T3 and more T4 hormones. In terms of tissue distribution, specifically expressed in the thyroid gland.

The protein resides in the secreted. Its function is as follows. Acts as a substrate for the production of iodinated thyroid hormones thyroxine (T4) and triiodothyronine (T3). The synthesis of T3 and T4 involves iodination of selected tyrosine residues of TG/thyroglobulin followed by their oxidative coupling. Following TG re-internalization and lysosomal-mediated proteolysis, T3 and T4 are released from the polypeptide backbone leading to their secretion into the bloodstream. One dimer produces 7 thyroid hormone molecules. In Mus musculus (Mouse), this protein is Thyroglobulin (Tg).